The following is a 146-amino-acid chain: Putative trafficking protein particle complex subunit TRS31 (146 aa).

Belongs to the TRAPP small subunits family. BET3 subfamily. Part of the multisubunit TRAPP (transport protein particle) complex.

It localises to the golgi apparatus. It is found in the cis-Golgi network. Its subcellular location is the endoplasmic reticulum. Functionally, may play a role in vesicular transport from endoplasmic reticulum to Golgi. This is Putative trafficking protein particle complex subunit TRS31 (TRS31) from Encephalitozoon cuniculi (strain GB-M1) (Microsporidian parasite).